We begin with the raw amino-acid sequence, 748 residues long: tRNA endonuclease ANKZF1 (748 aa).

Residues 96-120 form a C2H2-type zinc finger; that stretch reads LFCSACDQIFQNHQEQREHYKLDWH. The interval 135-185 is disordered; that stretch reads SASDFEQQSSTGDLSSISGSDDTDSSSEEDLLPLDEGRAESEKPNRPPGFY. A compositionally biased stretch (low complexity) spans 143 to 154; sequence SSTGDLSSISGS. The segment covering 155–167 has biased composition (acidic residues); that stretch reads DDTDSSSEEDLLP. Over residues 169-179 the composition is skewed to basic and acidic residues; the sequence is DEGRAESEKPN. Residues 227–370 enclose the VLRF1 domain; sequence GPRYYVVLMA…QRVLHKLTTL (144 aa). Residue Gln270 is part of the active site. A phosphoserine mark is found at Ser282 and Ser385. The segment covering 383–408 has biased composition (basic and acidic residues); the sequence is FHSPETHWKPVREERKKDTEKEKTKV. Disordered stretches follow at residues 383–438 and 460–497; these read FHSP…SEVE and RRRR…TQEV. Acidic residues predominate over residues 429–438; it reads SQEEDGSEVE. Positions 484–497 are enriched in polar residues; it reads QPQDEPFSQPTQEV. The ANK 1 repeat unit spans residues 515-545; sequence ELWDTLLAACRAGEVEVLKLQLATGLVDPGV. At Ser555 the chain carries Phosphoserine. An ANK 2 repeat occupies 556 to 585; it reads GGFTLLHAAAAAGRGLVVRLLLEAGADPTV. The segment at 621 to 677 is disordered; it reads KARVPGPLTQEMEARQATRKKEQKAARRQREQQQRKQREQEEQEQEEQRRFAALSDR. Residues 628 to 681 are a coiled coil; it reads LTQEMEARQATRKKEQKAARRQREQQQRKQREQEEQEQEEQRRFAALSDREKRA. Position 629 is a phosphothreonine (Thr629). A compositionally biased stretch (basic and acidic residues) spans 632-677; it reads MEARQATRKKEQKAARRQREQQQRKQREQEEQEQEEQRRFAALSDR. The VCP/p97-interacting motif (VIM) stretch occupies residues 654–666; that stretch reads QRKQREQEEQEQE. Phosphoserine is present on Ser702.

Belongs to the ANKZF1/VMS1 family. Interacts (via VIM motif) with VCP.

Its subcellular location is the cytoplasm. Endonuclease that cleaves polypeptidyl-tRNAs downstream of the ribosome-associated quality control (RQC) pathway to release incompletely synthesized polypeptides for degradation. The RQC pathway disassembles aberrantly stalled translation complexes to recycle or degrade the constituent parts. ANKZF1 acts downstream disassembly of stalled ribosomes and specifically cleaves off the terminal 3'-CCA nucleotides universal to all tRNAs from polypeptidyl-tRNAs, releasing (1) ubiquitinated polypeptides from 60S ribosomal subunit for degradation and (2) cleaved tRNAs. ANKZF1-cleaved tRNAs are then repaired and recycled by ELAC1 and TRNT1. Also plays a role in the cellular response to hydrogen peroxide and in the maintenance of mitochondrial integrity under conditions of cellular stress. This chain is tRNA endonuclease ANKZF1, found in Mus musculus (Mouse).